Here is a 382-residue protein sequence, read N- to C-terminus: Lipid-A-disaccharide synthase (382 aa).

The protein belongs to the LpxB family.

The enzyme catalyses 2-N,3-O-bis[(3R)-3-hydroxytetradecanoyl]-alpha-D-glucosaminyl 1-phosphate + UDP-2-N,3-O-bis[(3R)-3-hydroxytetradecanoyl]-alpha-D-glucosamine = lipid A disaccharide (E. coli) + UDP + H(+). It carries out the reaction a lipid X + a UDP-2-N,3-O-bis[(3R)-3-hydroxyacyl]-alpha-D-glucosamine = a lipid A disaccharide + UDP + H(+). It functions in the pathway glycolipid biosynthesis; lipid IV(A) biosynthesis; lipid IV(A) from (3R)-3-hydroxytetradecanoyl-[acyl-carrier-protein] and UDP-N-acetyl-alpha-D-glucosamine: step 5/6. Functionally, condensation of UDP-2,3-diacylglucosamine and 2,3-diacylglucosamine-1-phosphate to form lipid A disaccharide, a precursor of lipid A, a phosphorylated glycolipid that anchors the lipopolysaccharide to the outer membrane of the cell. The protein is Lipid-A-disaccharide synthase of Salmonella heidelberg (strain SL476).